A 365-amino-acid chain; its full sequence is Carbohydrate sulfotransferase 10 (365 aa).

The Cytoplasmic portion of the chain corresponds to 1–6 (MRRHWL). The chain crosses the membrane as a helical; Signal-anchor for type II membrane protein span at residues 7–27 (LVGACGWVLLILMFVSKFINF). Residues 28 to 356 (SFRIPGDYAG…RYQGDFSLFD (329 aa)) lie on the Lumenal side of the membrane. Residues asparagine 99 and asparagine 104 are each glycosylated (N-linked (GlcNAc...) asparagine). 3'-phosphoadenylyl sulfate is bound by residues 132-138 (PKVGNTQ) and 194-202 (RDPFERLIS). Asparagine 325 carries N-linked (GlcNAc...) asparagine glycosylation.

Belongs to the sulfotransferase 2 family.

It localises to the golgi apparatus membrane. Functionally, catalyzes the transfer of sulfate to position 3 of terminal glucuronic acid of both protein- and lipid-linked oligosaccharides. Participates in biosynthesis of HNK-1 carbohydrate structure, a sulfated glucuronyl-lactosaminyl residue carried by many neural recognition molecules. The protein is Carbohydrate sulfotransferase 10 (chst10) of Danio rerio (Zebrafish).